The primary structure comprises 413 residues: Bestrophin homolog 13 (413 aa).

4 helical membrane-spanning segments follow: residues 29–49 (LIYL…IDLI), 72–92 (SYTR…NVVA), 236–256 (LVYT…TLFG), and 272–292 (LVVP…FKVG).

It belongs to the anion channel-forming bestrophin (TC 1.A.46) family. Calcium-sensitive chloride channel subfamily. As to quaternary structure, forms oligomers.

It is found in the cell membrane. Forms chloride channels. This is Bestrophin homolog 13 (best-13) from Caenorhabditis elegans.